The primary structure comprises 351 residues: Protein IBD2 (351 aa).

Residues M1–S14 are compositionally biased toward polar residues. The disordered stretch occupies residues M1 to E20. Residues S100 and S106 each carry the phosphoserine modification. T211 carries the post-translational modification Phosphothreonine. Residues L223–R249 are disordered. Residues S232–R249 show a composition bias toward basic residues.

The protein belongs to the IBD2 family. As to quaternary structure, interacts with BFA1.

The protein localises to the cytoplasm. Its subcellular location is the cytoskeleton. It localises to the spindle pole. Its function is as follows. Part of a checkpoint which monitors spindle integrity and prevents premature exit from mitosis. This cell-cycle arrest depends upon inhibition of the G-protein TEM1 by the BFA1/BUB2 complex. The sequence is that of Protein IBD2 (IBD2) from Saccharomyces cerevisiae (strain ATCC 204508 / S288c) (Baker's yeast).